A 430-amino-acid chain; its full sequence is Enolase (430 aa).

Glutamine 163 contacts (2R)-2-phosphoglycerate. Catalysis depends on glutamate 205, which acts as the Proton donor. Mg(2+) is bound by residues aspartate 242, glutamate 286, and aspartate 313. Lysine 338, arginine 367, serine 368, and lysine 389 together coordinate (2R)-2-phosphoglycerate. Residue lysine 338 is the Proton acceptor of the active site.

It belongs to the enolase family. It depends on Mg(2+) as a cofactor.

The protein resides in the cytoplasm. The protein localises to the secreted. It localises to the cell surface. The enzyme catalyses (2R)-2-phosphoglycerate = phosphoenolpyruvate + H2O. The protein operates within carbohydrate degradation; glycolysis; pyruvate from D-glyceraldehyde 3-phosphate: step 4/5. Functionally, catalyzes the reversible conversion of 2-phosphoglycerate (2-PG) into phosphoenolpyruvate (PEP). It is essential for the degradation of carbohydrates via glycolysis. This is Enolase from Symbiobacterium thermophilum (strain DSM 24528 / JCM 14929 / IAM 14863 / T).